A 290-amino-acid chain; its full sequence is Ribosomal protein L11 methyltransferase (290 aa).

S-adenosyl-L-methionine contacts are provided by Thr135, Gly158, Asp180, and Asn227.

It belongs to the methyltransferase superfamily. PrmA family.

The protein resides in the cytoplasm. The enzyme catalyses L-lysyl-[protein] + 3 S-adenosyl-L-methionine = N(6),N(6),N(6)-trimethyl-L-lysyl-[protein] + 3 S-adenosyl-L-homocysteine + 3 H(+). Its function is as follows. Methylates ribosomal protein L11. The sequence is that of Ribosomal protein L11 methyltransferase from Mesorhizobium japonicum (strain LMG 29417 / CECT 9101 / MAFF 303099) (Mesorhizobium loti (strain MAFF 303099)).